Consider the following 547-residue polypeptide: Probable ABC transporter periplasmic-binding protein SapA (547 aa).

The first 21 residues, 1–21 (MRQVLSSLLVIAGLVSGQAIA), serve as a signal peptide directing secretion.

Belongs to the bacterial solute-binding protein 5 family.

The protein resides in the periplasm. Not part of a putrescine export system. Very similar to a S.typhimurium protein implicated in antimicrobial peptide resistance, but the SapBCDF operon in E.coli is implicated in putrescine export. This Escherichia coli (strain K12) protein is Probable ABC transporter periplasmic-binding protein SapA (sapA).